A 497-amino-acid polypeptide reads, in one-letter code: MSIPGLGQIAPQQPTTSTTRTITLRPFWEWRFEVPRSSIPTTNAAISAIGLGGAGAGGGGATVRLTSGTAERDGTELALNRTYTFPRNTQSKLLTYTGATLEVSGAFVDSVAQYPAPEASPQLPVLNLHFALQELRAAAAAGGSNHNNNNTNGGGAPGPRVMICGEKDSGKTTVARTLAALATRAGGQPLVGSVDPREGMLALPGTVSAAVFGTVMDVEDPAAGFGVSGTPSSGPSAVPVKLPMVYYVGRERVDEDVPLWRDLVGKLGSAVRDKFAADEVVREAGLLLDTPAASVAKGDLEVLTHVVNEFAGGLLGAGRTAGWQLTVTVNIVVVLGSVDLHAELQRRFENQRTVHGEAITLILLDKSDGVAERDKDFMKFTREAAIKEYFFGDAKRTLSPFTQSVSFDDVAVFRTPDALERAEVSAEMSHWTLAVMNASVNDPPEVIRQAPVMGFVAIADVDEDRRRLKVLSPVSGRLGNRPMIWGRWPEPYINLLG.

Residues 1–20 form a disordered region; sequence MSIPGLGQIAPQQPTTSTTR. ATP is bound by residues Glu-29 and 168–173; that span reads DSGKTT.

This sequence belongs to the Clp1 family. Clp1 subfamily. As to quaternary structure, component of a pre-mRNA cleavage factor complex. Interacts directly with PCF11.

The protein localises to the nucleus. Functionally, required for endonucleolytic cleavage during polyadenylation-dependent pre-mRNA 3'-end formation. The sequence is that of mRNA cleavage and polyadenylation factor CLP1 from Chaetomium globosum (strain ATCC 6205 / CBS 148.51 / DSM 1962 / NBRC 6347 / NRRL 1970) (Soil fungus).